Here is a 100-residue protein sequence, read N- to C-terminus: Tetrahydromethanopterin S-methyltransferase subunit B (100 aa).

A helical transmembrane segment spans residues 80–100; that stretch reads KLTNIVYGFILGLIILFALLL.

It belongs to the MtrB family. The complex is composed of 8 subunits; MtrA, MtrB, MtrC, MtrD, MtrE, MtrF, MtrG and MtrH.

The protein resides in the cell membrane. It catalyses the reaction 5-methyl-5,6,7,8-tetrahydromethanopterin + coenzyme M + 2 Na(+)(in) = 5,6,7,8-tetrahydromethanopterin + methyl-coenzyme M + 2 Na(+)(out). It functions in the pathway one-carbon metabolism; methanogenesis from CO(2); methyl-coenzyme M from 5,10-methylene-5,6,7,8-tetrahydromethanopterin: step 2/2. In terms of biological role, part of a complex that catalyzes the formation of methyl-coenzyme M and tetrahydromethanopterin from coenzyme M and methyl-tetrahydromethanopterin. This is an energy-conserving, sodium-ion translocating step. This Methanothermobacter marburgensis (strain ATCC BAA-927 / DSM 2133 / JCM 14651 / NBRC 100331 / OCM 82 / Marburg) (Methanobacterium thermoautotrophicum) protein is Tetrahydromethanopterin S-methyltransferase subunit B.